Here is a 242-residue protein sequence, read N- to C-terminus: tRNA pseudouridine synthase A (242 aa).

The active-site Nucleophile is the D51. Y107 is a substrate binding site.

It belongs to the tRNA pseudouridine synthase TruA family. Homodimer.

It carries out the reaction uridine(38/39/40) in tRNA = pseudouridine(38/39/40) in tRNA. In terms of biological role, formation of pseudouridine at positions 38, 39 and 40 in the anticodon stem and loop of transfer RNAs. The chain is tRNA pseudouridine synthase A from Helicobacter pylori (strain ATCC 700392 / 26695) (Campylobacter pylori).